We begin with the raw amino-acid sequence, 292 residues long: 33 kDa chaperonin (292 aa).

Intrachain disulfides connect Cys-230–Cys-232 and Cys-263–Cys-266.

The protein belongs to the HSP33 family. Post-translationally, under oxidizing conditions two disulfide bonds are formed involving the reactive cysteines. Under reducing conditions zinc is bound to the reactive cysteines and the protein is inactive.

It is found in the cytoplasm. In terms of biological role, redox regulated molecular chaperone. Protects both thermally unfolding and oxidatively damaged proteins from irreversible aggregation. Plays an important role in the bacterial defense system toward oxidative stress. In Salmonella typhimurium (strain LT2 / SGSC1412 / ATCC 700720), this protein is 33 kDa chaperonin.